Reading from the N-terminus, the 479-residue chain is UDP-glycosyltransferase 85A8 (479 aa).

Residues Ser-302, 358-359, 376-384, and 398-401 each bind UDP-alpha-D-glucose; these read WC, HSGWNSTIE, and FAEQ.

It belongs to the UDP-glycosyltransferase family.

Its function is as follows. May glycosylate diterpenes or flavonols in leaves. This chain is UDP-glycosyltransferase 85A8, found in Stevia rebaudiana (Stevia).